We begin with the raw amino-acid sequence, 336 residues long: MLFGMRALKVLGIESTAHTFGVGIATSSGDILVNVNHTYVPRHGGIKPTEAAEHHSRVAPKVLSEALQKAGISVEEVDAVAVALGPGMGPCLRVGATLARYLALKFGKPLVPVNHAIAHLEISRLTTGLEDPVFVYVAGGNTMVTTFNEGRYRVFGETLDIPLGNCLDTFAREVGLGFPGVPRVEELALKGREYIPLPYTVKGQDVSYSGLLTHALSLYRSGRARLEDVCYSLVETAYSMLVEVAERALAHTGKSQLVLTGGVARSRILLEKLRRMVEDRGGVLGVVPPEYAGDNGAMIAYTGALAFSHGVRVPVEESRIQPYWRVDEVVIPWRSR.

The Fe cation site is built by H115, H119, and Y136. Substrate contacts are provided by residues 136 to 140 (YVAGG), D168, E185, and S266. Residue D294 participates in Fe cation binding.

The protein belongs to the KAE1 / TsaD family. Fe(2+) serves as cofactor.

It is found in the cytoplasm. It carries out the reaction L-threonylcarbamoyladenylate + adenosine(37) in tRNA = N(6)-L-threonylcarbamoyladenosine(37) in tRNA + AMP + H(+). Its function is as follows. Required for the formation of a threonylcarbamoyl group on adenosine at position 37 (t(6)A37) in tRNAs that read codons beginning with adenine. Is probably involved in the transfer of the threonylcarbamoyl moiety of threonylcarbamoyl-AMP (TC-AMP) to the N6 group of A37. The sequence is that of tRNA N6-adenosine threonylcarbamoyltransferase from Thermofilum pendens (strain DSM 2475 / Hrk 5).